Consider the following 371-residue polypeptide: Putative glutamate--cysteine ligase 2 (371 aa).

It belongs to the glutamate--cysteine ligase type 2 family. YbdK subfamily.

It carries out the reaction L-cysteine + L-glutamate + ATP = gamma-L-glutamyl-L-cysteine + ADP + phosphate + H(+). In terms of biological role, ATP-dependent carboxylate-amine ligase which exhibits weak glutamate--cysteine ligase activity. This chain is Putative glutamate--cysteine ligase 2, found in Burkholderia cenocepacia (strain HI2424).